The sequence spans 310 residues: Porphobilinogen deaminase (310 aa).

An S-(dipyrrolylmethanemethyl)cysteine modification is found at Cys241.

Belongs to the HMBS family. In terms of assembly, monomer. The cofactor is dipyrromethane.

It catalyses the reaction 4 porphobilinogen + H2O = hydroxymethylbilane + 4 NH4(+). It participates in porphyrin-containing compound metabolism; protoporphyrin-IX biosynthesis; coproporphyrinogen-III from 5-aminolevulinate: step 2/4. Its function is as follows. Tetrapolymerization of the monopyrrole PBG into the hydroxymethylbilane pre-uroporphyrinogen in several discrete steps. The protein is Porphobilinogen deaminase of Pelobacter propionicus (strain DSM 2379 / NBRC 103807 / OttBd1).